The sequence spans 475 residues: Chemotaxis protein MotD (475 aa).

Disordered stretches follow at residues methionine 1–glycine 175, leucine 195–aspartate 243, and glycine 408–methionine 475. The segment covering arginine 9–valine 22 has biased composition (polar residues). Positions alanine 79–alanine 100 are enriched in low complexity. A compositionally biased stretch (basic and acidic residues) spans histidine 143–isoleucine 155. Residues glycine 408–glutamine 417 are compositionally biased toward gly residues. Residues glutamate 427–threonine 449 show a composition bias toward basic and acidic residues.

The protein resides in the cytoplasm. Required for the rotation of the flagellar motor. Has a positive effect as flagellar rotation increases when an excess of motd is present. The polypeptide is Chemotaxis protein MotD (motD) (Rhizobium meliloti (Ensifer meliloti)).